Here is a 115-residue protein sequence, read N- to C-terminus: Probable 4-amino-4-deoxy-L-arabinose-phosphoundecaprenol flippase subunit ArnE (115 aa).

A run of 3 helical transmembrane segments spans residues 42–62, 65–85, and 93–112; these read PWPW…LLLL, VEVG…TLVA, and VDRR…ALLG. Residues 46–113 enclose the EamA domain; sequence LALLALGLGL…IVAGVALLGR (68 aa).

The protein belongs to the ArnE family. Heterodimer of ArnE and ArnF.

The protein localises to the cell inner membrane. The protein operates within bacterial outer membrane biogenesis; lipopolysaccharide biosynthesis. Functionally, translocates 4-amino-4-deoxy-L-arabinose-phosphoundecaprenol (alpha-L-Ara4N-phosphoundecaprenol) from the cytoplasmic to the periplasmic side of the inner membrane. The protein is Probable 4-amino-4-deoxy-L-arabinose-phosphoundecaprenol flippase subunit ArnE of Pseudomonas paraeruginosa (strain DSM 24068 / PA7) (Pseudomonas aeruginosa (strain PA7)).